A 277-amino-acid chain; its full sequence is Shikimate dehydrogenase (NADP(+)) (277 aa).

Shikimate is bound by residues 15 to 17 (SKS) and Thr64. The active-site Proton acceptor is the Lys68. 2 residues coordinate shikimate: Asn89 and Asp104. NADP(+) contacts are provided by residues 129 to 133 (GAGGA), 153 to 158 (NRTAKR), and Met217. Tyr219 contacts shikimate. Gly242 contacts NADP(+).

Belongs to the shikimate dehydrogenase family. As to quaternary structure, homodimer.

It carries out the reaction shikimate + NADP(+) = 3-dehydroshikimate + NADPH + H(+). Its pathway is metabolic intermediate biosynthesis; chorismate biosynthesis; chorismate from D-erythrose 4-phosphate and phosphoenolpyruvate: step 4/7. In terms of biological role, involved in the biosynthesis of the chorismate, which leads to the biosynthesis of aromatic amino acids. Catalyzes the reversible NADPH linked reduction of 3-dehydroshikimate (DHSA) to yield shikimate (SA). In Hydrogenovibrio crunogenus (strain DSM 25203 / XCL-2) (Thiomicrospira crunogena), this protein is Shikimate dehydrogenase (NADP(+)).